Here is a 611-residue protein sequence, read N- to C-terminus: tRNA uridine 5-carboxymethylaminomethyl modification enzyme MnmG (611 aa).

FAD-binding positions include 12–17, valine 124, and serine 179; that span reads GGGHAG. NAD(+) is bound at residue 271-285; the sequence is GPRYCPSVEDKIVRF. Glutamine 368 provides a ligand contact to FAD.

This sequence belongs to the MnmG family. In terms of assembly, homodimer. Heterotetramer of two MnmE and two MnmG subunits. FAD serves as cofactor.

The protein localises to the cytoplasm. NAD-binding protein involved in the addition of a carboxymethylaminomethyl (cmnm) group at the wobble position (U34) of certain tRNAs, forming tRNA-cmnm(5)s(2)U34. This Mycoplasma mobile (strain ATCC 43663 / 163K / NCTC 11711) (Mesomycoplasma mobile) protein is tRNA uridine 5-carboxymethylaminomethyl modification enzyme MnmG.